A 417-amino-acid chain; its full sequence is Cysteate synthase (417 aa).

Residue K102 is modified to N6-(pyridoxal phosphate)lysine. Positions 128 and 380 each coordinate pyridoxal 5'-phosphate.

Belongs to the threonine synthase family. Cysteate synthase subfamily. As to quaternary structure, homotrimer. Pyridoxal 5'-phosphate serves as cofactor.

The catalysed reaction is O-phospho-L-serine + sulfite + H(+) = L-cysteate + phosphate. Its pathway is cofactor biosynthesis; coenzyme M biosynthesis. Its function is as follows. Specifically catalyzes the beta-elimination of phosphate from L-phosphoserine and the beta-addition of sulfite to the dehydroalanine intermediate to produce L-cysteate. The polypeptide is Cysteate synthase (Methanocella arvoryzae (strain DSM 22066 / NBRC 105507 / MRE50)).